A 65-amino-acid polypeptide reads, in one-letter code: Ferredoxin-like protein in vnf region (65 aa).

2 4Fe-4S ferredoxin-type domains span residues 2–29 (AMAIDGYECTVCGDCKPVCPTGSIVLQG) and 30–65 (GIYVIDADSCNECADLGEPRCLGVCPVDFCIQPLDD). Residues cysteine 10, cysteine 13, cysteine 16, cysteine 20, cysteine 39, cysteine 42, cysteine 50, and cysteine 54 each contribute to the [4Fe-4S] cluster site.

Requires [4Fe-4S] cluster as cofactor.

This chain is Ferredoxin-like protein in vnf region, found in Azotobacter chroococcum mcd 1.